A 286-amino-acid chain; its full sequence is Release factor glutamine methyltransferase (286 aa).

Aspartate 136 and asparagine 179 together coordinate S-adenosyl-L-methionine. 179 to 182 (NPPY) provides a ligand contact to substrate.

This sequence belongs to the protein N5-glutamine methyltransferase family. PrmC subfamily.

The enzyme catalyses L-glutaminyl-[peptide chain release factor] + S-adenosyl-L-methionine = N(5)-methyl-L-glutaminyl-[peptide chain release factor] + S-adenosyl-L-homocysteine + H(+). Methylates the class 1 translation termination release factors RF1/PrfA and RF2/PrfB on the glutamine residue of the universally conserved GGQ motif. The polypeptide is Release factor glutamine methyltransferase (Borreliella burgdorferi (strain ATCC 35210 / DSM 4680 / CIP 102532 / B31) (Borrelia burgdorferi)).